The primary structure comprises 348 residues: Lipoyl synthase (348 aa).

Residues cysteine 55, cysteine 60, cysteine 66, cysteine 81, cysteine 85, cysteine 88, and serine 292 each contribute to the [4Fe-4S] cluster site. Residues 67-281 enclose the Radical SAM core domain; sequence WESREATFLI…ADAAKEMGFA (215 aa).

This sequence belongs to the radical SAM superfamily. Lipoyl synthase family. The cofactor is [4Fe-4S] cluster.

It localises to the cytoplasm. The enzyme catalyses [[Fe-S] cluster scaffold protein carrying a second [4Fe-4S](2+) cluster] + N(6)-octanoyl-L-lysyl-[protein] + 2 oxidized [2Fe-2S]-[ferredoxin] + 2 S-adenosyl-L-methionine + 4 H(+) = [[Fe-S] cluster scaffold protein] + N(6)-[(R)-dihydrolipoyl]-L-lysyl-[protein] + 4 Fe(3+) + 2 hydrogen sulfide + 2 5'-deoxyadenosine + 2 L-methionine + 2 reduced [2Fe-2S]-[ferredoxin]. The protein operates within protein modification; protein lipoylation via endogenous pathway; protein N(6)-(lipoyl)lysine from octanoyl-[acyl-carrier-protein]: step 2/2. Its function is as follows. Catalyzes the radical-mediated insertion of two sulfur atoms into the C-6 and C-8 positions of the octanoyl moiety bound to the lipoyl domains of lipoate-dependent enzymes, thereby converting the octanoylated domains into lipoylated derivatives. This is Lipoyl synthase from Corynebacterium glutamicum (strain R).